The sequence spans 512 residues: Cytochrome P450 monooxygenase ABA1 (512 aa).

The helical transmembrane segment at 13–32 threads the bilayer; sequence HWLSGILAIATVYLATSYII. Cys-458 lines the heme pocket.

Belongs to the cytochrome P450 family. It depends on heme as a cofactor.

Its subcellular location is the membrane. It functions in the pathway hormone biosynthesis. Cytochrome P450 monooxygenase involved in the biosynthesis of abscisic acid (ABA), a phytohormone that acts antagonistically toward salicylic acid (SA), jasmonic acid (JA) and ethylene (ETH) signaling, to impede plant defense responses. During pathogen-host interaction, ABA plays a dual role in disease severity by increasing plant susceptibility and accelerating pathogenesis in the fungus itself. The first step of the pathway catalyzes the reaction from farnesyl diphosphate to alpha-ionylideneethane performed by the alpha-ionylideneethane synthase ABA3 via a three-step reaction mechanism involving 2 neutral intermediates, beta-farnesene and allofarnesene. The cytochrome P450 monooxygenase ABA1 might then be involved in the conversion of alpha-ionylideneethane to alpha-ionylideneacetic acid. Alpha-ionylideneacetic acid is further converted to abscisic acid in 2 steps involving the cytochrome P450 monooxygenase ABA2 and the short-chain dehydrogenase/reductase ABA4, via the intermediates 1'-deoxy-ABA or 1',4'-trans-diol-ABA, depending on the order of action of these 2 enzymes. ABA2 is responsible for the hydroxylation of carbon atom C-1' and ABA4 might be involved in the oxidation of the C-4' carbon atom. The sequence is that of Cytochrome P450 monooxygenase ABA1 from Pyricularia oryzae (strain Y34) (Rice blast fungus).